We begin with the raw amino-acid sequence, 170 residues long: Co-chaperone protein HscB homolog (170 aa).

Residues aspartate 5–glycine 79 form the J domain.

Belongs to the HscB family. In terms of assembly, interacts with HscA and stimulates its ATPase activity.

Functionally, co-chaperone involved in the maturation of iron-sulfur cluster-containing proteins. Seems to help targeting proteins to be folded toward HscA. The protein is Co-chaperone protein HscB homolog of Bordetella petrii (strain ATCC BAA-461 / DSM 12804 / CCUG 43448).